A 272-amino-acid polypeptide reads, in one-letter code: Orotidine 5'-phosphate decarboxylase (272 aa).

Lysine 96 acts as the Proton donor in catalysis.

It belongs to the OMP decarboxylase family. Type 2 subfamily.

The catalysed reaction is orotidine 5'-phosphate + H(+) = UMP + CO2. It participates in pyrimidine metabolism; UMP biosynthesis via de novo pathway; UMP from orotate: step 2/2. This is Orotidine 5'-phosphate decarboxylase from Phocaeicola vulgatus (strain ATCC 8482 / DSM 1447 / JCM 5826 / CCUG 4940 / NBRC 14291 / NCTC 11154) (Bacteroides vulgatus).